The following is a 160-amino-acid chain: Ribosomal RNA large subunit methyltransferase H (160 aa).

Residues leucine 76, glycine 108, and leucine 127–tryptophan 132 contribute to the S-adenosyl-L-methionine site.

Belongs to the RNA methyltransferase RlmH family. Homodimer.

The protein localises to the cytoplasm. It carries out the reaction pseudouridine(1915) in 23S rRNA + S-adenosyl-L-methionine = N(3)-methylpseudouridine(1915) in 23S rRNA + S-adenosyl-L-homocysteine + H(+). Specifically methylates the pseudouridine at position 1915 (m3Psi1915) in 23S rRNA. The protein is Ribosomal RNA large subunit methyltransferase H of Agrobacterium fabrum (strain C58 / ATCC 33970) (Agrobacterium tumefaciens (strain C58)).